A 471-amino-acid chain; its full sequence is 6-phosphofructo-2-kinase/fructose-2,6-bisphosphatase 1 (471 aa).

S2 bears the N-acetylserine mark. Residues 2–250 form a 6-phosphofructo-2-kinase region; the sequence is SREMGELTQT…AYYLMNIHVT (249 aa). At S33 the chain carries Phosphoserine; by PKA. Position 49–57 (49–57) interacts with ATP; that stretch reads GLPARGKTY. 2 residues coordinate beta-D-fructose 6-phosphate: R82 and R105. D131 is an active-site residue. Beta-D-fructose 6-phosphate contacts are provided by T133 and R139. S141 carries the phosphoserine modification. C161 is a catalytic residue. 170–175 contacts ATP; it reads NIKQVK. Beta-D-fructose 6-phosphate is bound by residues K175, R196, and Y200. Residues 251 to 471 form a fructose-2,6-bisphosphatase region; it reads PRSIYLCRHG…EALDTVPAHY (221 aa). Residue R258 participates in beta-D-fructose 2,6-bisphosphate binding. Residue H259 is the Tele-phosphohistidine intermediate of the active site. Beta-D-fructose 2,6-bisphosphate-binding residues include N265, G271, and R308. E328 serves as the catalytic Proton donor/acceptor. Beta-D-fructose 2,6-bisphosphate-binding residues include Y339, R353, K357, Y368, Q394, and R398. 350-353 is a binding site for ATP; sequence FALR. Residues 394 to 398 and Y430 each bind ATP; that span reads QAVMR.

In the C-terminal section; belongs to the phosphoglycerate mutase family. As to quaternary structure, homodimer. As to expression, liver.

The enzyme catalyses beta-D-fructose 2,6-bisphosphate + H2O = beta-D-fructose 6-phosphate + phosphate. It catalyses the reaction beta-D-fructose 6-phosphate + ATP = beta-D-fructose 2,6-bisphosphate + ADP + H(+). Phosphorylation at Ser-33 inhibits the kinase and activates the bisphosphatase. In terms of biological role, synthesis and degradation of fructose 2,6-bisphosphate. In Mus musculus (Mouse), this protein is 6-phosphofructo-2-kinase/fructose-2,6-bisphosphatase 1.